The primary structure comprises 290 residues: Ribosomal RNA small subunit methyltransferase A (290 aa).

Histidine 37, valine 39, glycine 64, glutamate 85, aspartate 115, and asparagine 132 together coordinate S-adenosyl-L-methionine.

This sequence belongs to the class I-like SAM-binding methyltransferase superfamily. rRNA adenine N(6)-methyltransferase family. RsmA subfamily.

It localises to the cytoplasm. The enzyme catalyses adenosine(1518)/adenosine(1519) in 16S rRNA + 4 S-adenosyl-L-methionine = N(6)-dimethyladenosine(1518)/N(6)-dimethyladenosine(1519) in 16S rRNA + 4 S-adenosyl-L-homocysteine + 4 H(+). Functionally, specifically dimethylates two adjacent adenosines (A1518 and A1519) in the loop of a conserved hairpin near the 3'-end of 16S rRNA in the 30S particle. May play a critical role in biogenesis of 30S subunits. This is Ribosomal RNA small subunit methyltransferase A from Acidothermus cellulolyticus (strain ATCC 43068 / DSM 8971 / 11B).